We begin with the raw amino-acid sequence, 315 residues long: 4-hydroxy-3-methylbut-2-enyl diphosphate reductase (315 aa).

C12 provides a ligand contact to [4Fe-4S] cluster. Residues H40 and H74 each coordinate (2E)-4-hydroxy-3-methylbut-2-enyl diphosphate. Positions 40 and 74 each coordinate dimethylallyl diphosphate. Residues H40 and H74 each coordinate isopentenyl diphosphate. C96 contacts [4Fe-4S] cluster. Position 124 (H124) interacts with (2E)-4-hydroxy-3-methylbut-2-enyl diphosphate. Dimethylallyl diphosphate is bound at residue H124. H124 provides a ligand contact to isopentenyl diphosphate. E126 serves as the catalytic Proton donor. T167 lines the (2E)-4-hydroxy-3-methylbut-2-enyl diphosphate pocket. Residue C213 participates in [4Fe-4S] cluster binding. Residues S241, S242, N243, and S290 each contribute to the (2E)-4-hydroxy-3-methylbut-2-enyl diphosphate site. Dimethylallyl diphosphate contacts are provided by S241, S242, N243, and S290. Isopentenyl diphosphate is bound by residues S241, S242, N243, and S290.

Belongs to the IspH family. Requires [4Fe-4S] cluster as cofactor.

It catalyses the reaction isopentenyl diphosphate + 2 oxidized [2Fe-2S]-[ferredoxin] + H2O = (2E)-4-hydroxy-3-methylbut-2-enyl diphosphate + 2 reduced [2Fe-2S]-[ferredoxin] + 2 H(+). The enzyme catalyses dimethylallyl diphosphate + 2 oxidized [2Fe-2S]-[ferredoxin] + H2O = (2E)-4-hydroxy-3-methylbut-2-enyl diphosphate + 2 reduced [2Fe-2S]-[ferredoxin] + 2 H(+). The protein operates within isoprenoid biosynthesis; dimethylallyl diphosphate biosynthesis; dimethylallyl diphosphate from (2E)-4-hydroxy-3-methylbutenyl diphosphate: step 1/1. It functions in the pathway isoprenoid biosynthesis; isopentenyl diphosphate biosynthesis via DXP pathway; isopentenyl diphosphate from 1-deoxy-D-xylulose 5-phosphate: step 6/6. In terms of biological role, catalyzes the conversion of 1-hydroxy-2-methyl-2-(E)-butenyl 4-diphosphate (HMBPP) into a mixture of isopentenyl diphosphate (IPP) and dimethylallyl diphosphate (DMAPP). Acts in the terminal step of the DOXP/MEP pathway for isoprenoid precursor biosynthesis. This is 4-hydroxy-3-methylbut-2-enyl diphosphate reductase from Chloroherpeton thalassium (strain ATCC 35110 / GB-78).